Reading from the N-terminus, the 285-residue chain is Bifunctional protein FolD (285 aa).

NADP(+)-binding positions include 169 to 171, S194, and I235; that span reads GRS.

The protein belongs to the tetrahydrofolate dehydrogenase/cyclohydrolase family. Homodimer.

It catalyses the reaction (6R)-5,10-methylene-5,6,7,8-tetrahydrofolate + NADP(+) = (6R)-5,10-methenyltetrahydrofolate + NADPH. The catalysed reaction is (6R)-5,10-methenyltetrahydrofolate + H2O = (6R)-10-formyltetrahydrofolate + H(+). Its pathway is one-carbon metabolism; tetrahydrofolate interconversion. Functionally, catalyzes the oxidation of 5,10-methylenetetrahydrofolate to 5,10-methenyltetrahydrofolate and then the hydrolysis of 5,10-methenyltetrahydrofolate to 10-formyltetrahydrofolate. The chain is Bifunctional protein FolD from Microcystis aeruginosa (strain NIES-843 / IAM M-2473).